Here is a 207-residue protein sequence, read N- to C-terminus: Redox-sensing transcriptional repressor Rex (207 aa).

Positions 17–56 (IYLRYLSYLQQVEVTTVSSQQMGKNLDVNPAQIRKDLAAF) form a DNA-binding region, H-T-H motif. 91–96 (GAGHLG) is an NAD(+) binding site.

This sequence belongs to the transcriptional regulatory Rex family. In terms of assembly, homodimer.

It localises to the cytoplasm. Its function is as follows. Modulates transcription in response to changes in cellular NADH/NAD(+) redox state. This Brevibacillus brevis (strain 47 / JCM 6285 / NBRC 100599) protein is Redox-sensing transcriptional repressor Rex.